Consider the following 496-residue polypeptide: PE-PGRS family protein PE_PGRS1 (496 aa).

A PE domain is found at Leu4–Asn94. A disordered region spans residues Leu461 to Gly480.

It belongs to the mycobacterial PE family. PGRS subfamily.

The protein localises to the secreted. Its subcellular location is the cell wall. The protein resides in the host mitochondrion. Functionally, when expressed in host mitochondria, induces mitochondrial stress which results in mitochondrial membrane depolarization, up-regulation of mitochondrial superoxides and release of cytochrome-C in the cytoplasm. The cytochrome-C in cytoplasm triggers the activation of caspase-9, caspase-3 and caspase-7, leading to the apoptosis of host macrophages. Being a late expressing protein, apoptosis induction by PE_PGRS1 may facilitate the M.tuberculosis survival and silent expansion of its niche at the site of granuloma. Its function is as follows. When expressed in THP-1 macrophages, promotes the survival of mycobacteria within macrophages after a 24- to 48-hour infection by blocking endoplasmic reticulum stress and inhibiting host cell apoptosis. Can chelate excessive intracellular calcium in THP-1 macrophages, which reduces the concentration of intracellular free Ca(2+) and blocks the PERK-eIF2alpha-ATF4 axis, thereby inhibiting the endoplasmic reticulum stress caused by infection. It also reduces the apoptosis of THP-1 macrophages by decreasing the activation of caspase-3 and caspase-9. This is PE-PGRS family protein PE_PGRS1 from Mycobacterium tuberculosis (strain ATCC 25618 / H37Rv).